Here is a 377-residue protein sequence, read N- to C-terminus: Spermidine/putrescine import ATP-binding protein PotA (377 aa).

The region spanning 18 to 248 is the ABC transporter domain; that stretch reads IRLSGISKSF…PKNLFVARFI (231 aa). 50–57 serves as a coordination point for ATP; sequence GPSGCGKT.

The protein belongs to the ABC transporter superfamily. Spermidine/putrescine importer (TC 3.A.1.11.1) family. As to quaternary structure, the complex is composed of two ATP-binding proteins (PotA), two transmembrane proteins (PotB and PotC) and a solute-binding protein (PotD).

It is found in the cell inner membrane. It carries out the reaction ATP + H2O + polyamine-[polyamine-binding protein]Side 1 = ADP + phosphate + polyamineSide 2 + [polyamine-binding protein]Side 1.. Its function is as follows. Part of the ABC transporter complex PotABCD involved in spermidine/putrescine import. Responsible for energy coupling to the transport system. The protein is Spermidine/putrescine import ATP-binding protein PotA of Vibrio vulnificus (strain CMCP6).